We begin with the raw amino-acid sequence, 249 residues long: Isoprenyl transferase (249 aa).

Asp-29 is an active-site residue. Asp-29 is a binding site for Mg(2+). Substrate is bound by residues 30 to 33, Trp-34, Arg-42, His-46, and 74 to 76; these read GNGR and STE. Asn-77 acts as the Proton acceptor in catalysis. Substrate is bound by residues Trp-78, Arg-80, Arg-197, and 203-205; that span reads RLS. Residue Glu-216 coordinates Mg(2+).

It belongs to the UPP synthase family. Homodimer. It depends on Mg(2+) as a cofactor.

In terms of biological role, catalyzes the condensation of isopentenyl diphosphate (IPP) with allylic pyrophosphates generating different type of terpenoids. This is Isoprenyl transferase from Gloeobacter violaceus (strain ATCC 29082 / PCC 7421).